The primary structure comprises 481 residues: Anti-sigma-I factor RsgI5 (481 aa).

The Cytoplasmic portion of the chain corresponds to 1–50 (MKHKGIVLKLTKSKAIISTNDFQCYYIKRSPTIYVGKEVEFTNKDIVTKK). The region spanning 3–50 (HKGIVLKLTKSKAIISTNDFQCYYIKRSPTIYVGKEVEFTNKDIVTKK) is the RsgI N-terminal anti-sigma domain. The helical transmembrane segment at 51–71 (SVLIKPALSVACFILLIACVL) threads the bilayer. Over 72–481 (SLSKIINNIS…DATFIGIKVD (410 aa)) the chain is Extracellular. The interval 255–339 (ASEERNPEES…TPTPTPTPAD (85 aa)) is disordered. Basic and acidic residues predominate over residues 256-265 (SEERNPEESP). Composition is skewed to low complexity over residues 266 to 283 (KMTPTPTPTHTATHTPTD) and 291 to 315 (NTPTSTPAAKPSPKTASNSASTSTP). A compositionally biased stretch (pro residues) spans 316 to 336 (APKPTSTPTPTLMPTPTPTPT).

Interacts (via RsgI N-terminal anti-sigma domain) with SigI5.

It localises to the cell membrane. Its function is as follows. Anti-sigma factor for SigI5. Negatively regulates SigI5 activity through direct interaction. Binding of the polysaccharide substrate to the extracellular C-terminal sensing domain of RsgI5 may induce a conformational change in its N-terminal cytoplasmic region, leading to the release and activation of SigI5. The polypeptide is Anti-sigma-I factor RsgI5 (Acetivibrio thermocellus (strain ATCC 27405 / DSM 1237 / JCM 9322 / NBRC 103400 / NCIMB 10682 / NRRL B-4536 / VPI 7372) (Clostridium thermocellum)).